Consider the following 508-residue polypeptide: CXXC-type zinc finger protein 1 (508 aa).

The CXXC-type zinc-finger motif lies at 10–47; the sequence is EDVWKERCMNCIRCNDEKNCGTCWPCRNGKTCDMRKCF. 2 disordered regions span residues 95-156 and 453-508; these read QQVE…EPDK and KSQS…TQNN. Low complexity-rich tracts occupy residues 113 to 123 and 454 to 481; these read AAAAAQQRKAN and SQST…SSSS.

In terms of assembly, component of the SET2 complex (also known as the SET1/COMPASS complex), which contains at least set-2, swd-2.1, cfp-1, rbbp-5, wdr-5.1, dpy-30 and ash-2. Within the complex, interacts with wdr-5.1, ash-2 and dpy-30. Also interacts with the SIN3S complex, which contains at least sin-3, hda-1, athp-1 and mrg-1. Interacts with sin-3, hda-1 and mrg-1.

Its subcellular location is the nucleus. Transcriptional activator that exhibits a unique DNA binding specificity for CpG motifs; enriched at promoters containing the trimethylation mark on histone H3 'Lys-4' (H3K4me3). Forms part of the SET2 complex and interacts with the SIN3S HDAC complex at promoters. Required for H3K4 trimethylation and plays a repressive role in the expression of heat shock and salt-inducible genes. Required for fertility, in cooperation with class I histone deacetylases (HDACs). This Caenorhabditis elegans protein is CXXC-type zinc finger protein 1.